The chain runs to 234 residues: MTVHIGAAPGDIAETVLMPGDPLRAKWAAERFLENPVCVNEVRGMLGFTGMWRGNRVTIHGSGMGMPSLSIYANELLRDYGAKTLIRIGSCGAMQADVKLRDVILAMTASTLSTPSSGIFRELNYAPCADYGLLQAAYKAAEGKGSPIHVGGIYSSDVFYDERPDLNEQMVRHGVLAVEMEAAELYTLAARHKARALAVLTVSDHLLTEEALPSEERQSSFSDMVEIALEAAFS.

His4 is an a purine D-ribonucleoside binding site. Residues Gly20, Arg24, Arg43, and 87-90 (RIGS) each bind phosphate. A purine D-ribonucleoside-binding positions include Glu162, 179-181 (EME), and 203-204 (SD). Asp204 functions as the Proton donor in the catalytic mechanism.

Belongs to the PNP/UDP phosphorylase family. Homohexamer; trimer of homodimers.

It catalyses the reaction a purine D-ribonucleoside + phosphate = a purine nucleobase + alpha-D-ribose 1-phosphate. It carries out the reaction a purine 2'-deoxy-D-ribonucleoside + phosphate = a purine nucleobase + 2-deoxy-alpha-D-ribose 1-phosphate. Catalyzes the reversible phosphorolytic breakdown of the N-glycosidic bond in the beta-(deoxy)ribonucleoside molecules, with the formation of the corresponding free purine bases and pentose-1-phosphate. The chain is Purine nucleoside phosphorylase DeoD-type from Jannaschia sp. (strain CCS1).